We begin with the raw amino-acid sequence, 300 residues long: UDP-N-acetylenolpyruvoylglucosamine reductase (300 aa).

The 169-residue stretch at 22–190 (RVGGAAEWLA…LSARFRLQPG (169 aa)) folds into the FAD-binding PCMH-type domain. R169 is a catalytic residue. S220 functions as the Proton donor in the catalytic mechanism. Residue E290 is part of the active site.

The protein belongs to the MurB family. FAD is required as a cofactor.

The protein localises to the cytoplasm. The catalysed reaction is UDP-N-acetyl-alpha-D-muramate + NADP(+) = UDP-N-acetyl-3-O-(1-carboxyvinyl)-alpha-D-glucosamine + NADPH + H(+). The protein operates within cell wall biogenesis; peptidoglycan biosynthesis. Cell wall formation. This Synechococcus sp. (strain CC9605) protein is UDP-N-acetylenolpyruvoylglucosamine reductase.